Consider the following 1045-residue polypeptide: Extracellular serine protease (1045 aa).

The signal sequence occupies residues 1 to 27; the sequence is MILNKKLKLAYCVFLGCYGLSLHSSLA. One can recognise a Peptidase S8 domain in the interval 49–396; that stretch reads QWGLEAISAE…WGRVNLRDAI (348 aa). Active-site charge relay system residues include aspartate 76, histidine 112, and serine 341. A propeptide spanning residues 646–1045 is cleaved from the precursor; that stretch reads SLASTENDKE…SVNAGLTWRF (400 aa). The Autotransporter domain maps to 769-1045; that stretch reads IKADDNGAWA…SVNAGLTWRF (277 aa).

The protein belongs to the peptidase S8 family.

The protein resides in the secreted. The sequence is that of Extracellular serine protease from Serratia marcescens.